A 351-amino-acid polypeptide reads, in one-letter code: N(4)-bis(aminopropyl)spermidine synthase (351 aa).

The protein belongs to the branched-chain polyamine synthase family.

The protein resides in the cytoplasm. The catalysed reaction is 2 S-adenosyl 3-(methylsulfanyl)propylamine + spermidine = N(4)-bis(aminopropyl)spermidine + 2 S-methyl-5'-thioadenosine + 2 H(+). It participates in amine and polyamine biosynthesis. Functionally, involved in the biosynthesis of branched-chain polyamines, which support the growth of thermophiles under high-temperature conditions. Catalyzes the sequential condensation of spermidine with the aminopropyl groups of decarboxylated S-adenosylmethionines to produce N(4)-bis(aminopropyl)spermidine via N(4)-aminopropylspermidine. Can also use spermine to produce N(4)-aminopropylspermine. The sequence is that of N(4)-bis(aminopropyl)spermidine synthase from Thermococcus kodakarensis (strain ATCC BAA-918 / JCM 12380 / KOD1) (Pyrococcus kodakaraensis (strain KOD1)).